Consider the following 233-residue polypeptide: Ribonuclease 3 (233 aa).

The 130-residue stretch at 7–136 folds into the RNase III domain; that stretch reads KQYLLSEFNI…FIGALYLDQG (130 aa). Glu-49 contacts Mg(2+). The active site involves Asp-53. Mg(2+) is bound by residues Asp-122 and Glu-125. The active site involves Glu-125. The region spanning 162-232 is the DRBM domain; sequence DFKSRLQEKL…ARAALKLLEE (71 aa).

The protein belongs to the ribonuclease III family. Homodimer. The cofactor is Mg(2+).

It localises to the cytoplasm. The enzyme catalyses Endonucleolytic cleavage to 5'-phosphomonoester.. Its function is as follows. Digests double-stranded RNA. Involved in the processing of primary rRNA transcript to yield the immediate precursors to the large and small rRNAs (23S and 16S). Processes some mRNAs, and tRNAs when they are encoded in the rRNA operon. Processes pre-crRNA and tracrRNA of type II CRISPR loci if present in the organism. This is Ribonuclease 3 from Leuconostoc citreum (strain KM20).